Here is a 353-residue protein sequence, read N- to C-terminus: Protein disulfide isomerase CRELD2 (353 aa).

The N-terminal stretch at 1 to 24 (MRLPRRAALGLLPLLLLLPPAPEA) is a signal peptide. The short motif at 31–34 (CHRC) is the CXXC element. 4 disulfides stabilise this stretch: C31–C34, C140–C154, C148–C166, and C168–C177. Residues 136-178 (DCLACQGGSQRPCSGNGHCSGDGSRQGDGSCRCHMGYQGPLCT) enclose the EGF-like 1 domain. The stretch at 193–240 (HSICTACDESCKTCSGLTNRDCGECEVGWVLDEGACVDVDECAAEPPP) is one FU 1 repeat. A glycan (N-linked (GlcNAc...) asparagine) is linked at N251. The stretch at 253-302 (SYTCEECDSSCVGCTGEGPGNCKECISGYAREHGQCADVDECSLAEKTCV) is one FU 2 repeat. A CXXC motif is present at residues 263 to 266 (CVGC). 4 disulfide bridges follow: C263–C266, C294–C308, C301–C317, and C319–C330. The region spanning 290–331 (DVDECSLAEKTCVRKNENCYNTPGSYVCVCPDGFEETEDACV) is the EGF-like 2; calcium-binding domain. A disordered region spans residues 332–353 (PPAEAEATEGESPTQLPSREDL). Positions 342 to 353 (ESPTQLPSREDL) are enriched in polar residues.

It belongs to the CRELD family. In terms of assembly, interacts with CHRNA4. Component of a complex containing at least CRELD2, MANF, MATN3 and PDIA4. As to expression, ubiquitously expressed. Highly expressed in skeletal muscle, heart, liver, kidney and placenta.

The protein localises to the endoplasmic reticulum. The catalysed reaction is Catalyzes the rearrangement of -S-S- bonds in proteins.. Functionally, protein disulfide isomerase. Might play a role in the unfolded protein response. May regulate transport of alpha4-beta2 neuronal acetylcholine receptor. The chain is Protein disulfide isomerase CRELD2 (CRELD2) from Homo sapiens (Human).